A 382-amino-acid chain; its full sequence is Alanine racemase (382 aa).

The active-site Proton acceptor; specific for D-alanine is the Lys-39. Position 39 is an N6-(pyridoxal phosphate)lysine (Lys-39). Arg-138 provides a ligand contact to substrate. Tyr-265 serves as the catalytic Proton acceptor; specific for L-alanine. Residue Met-312 coordinates substrate.

Belongs to the alanine racemase family. Pyridoxal 5'-phosphate is required as a cofactor.

It catalyses the reaction L-alanine = D-alanine. The protein operates within amino-acid biosynthesis; D-alanine biosynthesis; D-alanine from L-alanine: step 1/1. Catalyzes the interconversion of L-alanine and D-alanine. May also act on other amino acids. This is Alanine racemase (alr) from Staphylococcus epidermidis (strain ATCC 35984 / DSM 28319 / BCRC 17069 / CCUG 31568 / BM 3577 / RP62A).